The primary structure comprises 350 residues: D-alanine--D-alanine ligase (350 aa).

The region spanning Lys-134–Ser-337 is the ATP-grasp domain. Ile-160–Tyr-212 is an ATP binding site. Positions 289, 301, and 303 each coordinate Mg(2+).

Belongs to the D-alanine--D-alanine ligase family. It depends on Mg(2+) as a cofactor. Requires Mn(2+) as cofactor.

It localises to the cytoplasm. The enzyme catalyses 2 D-alanine + ATP = D-alanyl-D-alanine + ADP + phosphate + H(+). It functions in the pathway cell wall biogenesis; peptidoglycan biosynthesis. In terms of biological role, cell wall formation. This Helicobacter hepaticus (strain ATCC 51449 / 3B1) protein is D-alanine--D-alanine ligase.